We begin with the raw amino-acid sequence, 1641 residues long: Helicase SWR1 (1641 aa).

Disordered stretches follow at residues 1–54 and 184–230; these read MPEN…STQS and SQEK…EDQD. 2 stretches are compositionally biased toward polar residues: residues 12 to 44 and 184 to 214; these read ARLT…STAS and SQEK…TTPK. Residues 215-226 show a composition bias toward basic and acidic residues; it reads RGNENGSRKQAL. The HSA domain occupies 416–488; the sequence is KPKLHGAANN…REQNLKKMSR (73 aa). Positions 461 to 521 form a coiled coil; the sequence is IDQHFKKKKG…KEEELKKIKG (61 aa). Disordered stretches follow at residues 537–669 and 686–782; these read EAQL…EVAD and EDLN…RELE. Residues 555–571 are compositionally biased toward low complexity; sequence NSTTFDDNTNDSDNFSS. Acidic residues predominate over residues 572-581; it reads SEEEENEEDN. A compositionally biased stretch (basic and acidic residues) spans 590–600; it reads KKYDVNGKSND. A compositionally biased stretch (acidic residues) spans 639–652; sequence TSSEDAESSDDDDT. The segment covering 701–711 has biased composition (low complexity); the sequence is DSDSVSSISDS. Acidic residues predominate over residues 712 to 723; the sequence is ESSEESSSDTEM. Residues 727 to 752 show a composition bias toward polar residues; it reads NVSEPPRSSETGSNTGLASLFTNGTI. Positions 835–1000 constitute a Helicase ATP-binding domain; it reads ASLYNNNTNG…WSLLYFLMPS (166 aa). An ATP-binding site is contributed by 848-855; that stretch reads DEMGLGKT. The DEAH box motif lies at 951 to 954; it reads DEAH. Residues 1367–1520 form the Helicase C-terminal domain; the sequence is KLQKLATLLQ…NVVIQEGEFT (154 aa). The segment at 1586-1607 is disordered; that stretch reads KEETRSATTGATPAPTETNALS. Residues 1591-1605 are compositionally biased toward low complexity; that stretch reads SATTGATPAPTETNA.

This sequence belongs to the SNF2/RAD54 helicase family. SWR1 subfamily. In terms of assembly, component of the SWR1 chromatin-remodeling complex.

It localises to the nucleus. It catalyses the reaction ATP + H2O = ADP + phosphate + H(+). In terms of biological role, catalytic component of the SWR1 complex which mediates the ATP-dependent exchange of histone H2A for the H2A variant HZT1 leading to transcriptional regulation of selected genes by chromatin remodeling. In Candida albicans (strain SC5314 / ATCC MYA-2876) (Yeast), this protein is Helicase SWR1 (SWR1).